We begin with the raw amino-acid sequence, 94 residues long: Small ribosomal subunit protein uS19 (94 aa).

It belongs to the universal ribosomal protein uS19 family.

Functionally, protein S19 forms a complex with S13 that binds strongly to the 16S ribosomal RNA. This chain is Small ribosomal subunit protein uS19, found in Halothermothrix orenii (strain H 168 / OCM 544 / DSM 9562).